The chain runs to 366 residues: GTPase Obg (366 aa).

The region spanning Met-1–Leu-162 is the Obg domain. The OBG-type G domain occupies Ala-163–Asp-335. Residues Gly-169–Ser-176, Phe-194–Thr-198, Asp-218–Gly-221, Asn-288–Asp-291, and Ser-316–Met-318 contribute to the GTP site. Residues Ser-176 and Thr-196 each coordinate Mg(2+).

This sequence belongs to the TRAFAC class OBG-HflX-like GTPase superfamily. OBG GTPase family. In terms of assembly, monomer. The cofactor is Mg(2+).

Its subcellular location is the cytoplasm. Its function is as follows. An essential GTPase which binds GTP, GDP and possibly (p)ppGpp with moderate affinity, with high nucleotide exchange rates and a fairly low GTP hydrolysis rate. Plays a role in control of the cell cycle, stress response, ribosome biogenesis and in those bacteria that undergo differentiation, in morphogenesis control. The chain is GTPase Obg from Nitratidesulfovibrio vulgaris (strain ATCC 29579 / DSM 644 / CCUG 34227 / NCIMB 8303 / VKM B-1760 / Hildenborough) (Desulfovibrio vulgaris).